We begin with the raw amino-acid sequence, 25 residues long: Large ribosomal subunit protein uL30 (25 aa).

This sequence belongs to the universal ribosomal protein uL30 family. As to quaternary structure, part of the 50S ribosomal subunit.

The chain is Large ribosomal subunit protein uL30 (rpmD) from Pseudomonas putida (Arthrobacter siderocapsulatus).